Consider the following 519-residue polypeptide: 2-isopropylmalate synthase (519 aa).

The Pyruvate carboxyltransferase domain occupies 12–274; sequence VVIFDTTLRD…WCNVESTTLT (263 aa). Mn(2+) contacts are provided by D21, H209, H211, and N245. The interval 398 to 519 is regulatory domain; sequence RLVSLTVIAG…QREAPVAAAS (122 aa).

The protein belongs to the alpha-IPM synthase/homocitrate synthase family. LeuA type 1 subfamily. As to quaternary structure, homodimer. Mn(2+) serves as cofactor.

Its subcellular location is the cytoplasm. It carries out the reaction 3-methyl-2-oxobutanoate + acetyl-CoA + H2O = (2S)-2-isopropylmalate + CoA + H(+). The protein operates within amino-acid biosynthesis; L-leucine biosynthesis; L-leucine from 3-methyl-2-oxobutanoate: step 1/4. Its function is as follows. Catalyzes the condensation of the acetyl group of acetyl-CoA with 3-methyl-2-oxobutanoate (2-ketoisovalerate) to form 3-carboxy-3-hydroxy-4-methylpentanoate (2-isopropylmalate). This chain is 2-isopropylmalate synthase, found in Afipia carboxidovorans (strain ATCC 49405 / DSM 1227 / KCTC 32145 / OM5) (Oligotropha carboxidovorans).